A 416-amino-acid chain; its full sequence is Multifunctional CCA protein (416 aa).

ATP contacts are provided by Gly-8 and Arg-11. Residues Gly-8 and Arg-11 each contribute to the CTP site. Asp-21 and Asp-23 together coordinate Mg(2+). Residues Arg-91, Arg-137, and Arg-140 each contribute to the ATP site. CTP contacts are provided by Arg-91, Arg-137, and Arg-140. The region spanning 226-327 (TGVHIMLVID…VNLLERCDAF (102 aa)) is the HD domain.

It belongs to the tRNA nucleotidyltransferase/poly(A) polymerase family. Bacterial CCA-adding enzyme type 1 subfamily. In terms of assembly, monomer. Can also form homodimers and oligomers. Requires Mg(2+) as cofactor. The cofactor is Ni(2+).

It carries out the reaction a tRNA precursor + 2 CTP + ATP = a tRNA with a 3' CCA end + 3 diphosphate. The enzyme catalyses a tRNA with a 3' CCA end + 2 CTP + ATP = a tRNA with a 3' CCACCA end + 3 diphosphate. Its function is as follows. Catalyzes the addition and repair of the essential 3'-terminal CCA sequence in tRNAs without using a nucleic acid template. Adds these three nucleotides in the order of C, C, and A to the tRNA nucleotide-73, using CTP and ATP as substrates and producing inorganic pyrophosphate. tRNA 3'-terminal CCA addition is required both for tRNA processing and repair. Also involved in tRNA surveillance by mediating tandem CCA addition to generate a CCACCA at the 3' terminus of unstable tRNAs. While stable tRNAs receive only 3'-terminal CCA, unstable tRNAs are marked with CCACCA and rapidly degraded. This chain is Multifunctional CCA protein, found in Janthinobacterium sp. (strain Marseille) (Minibacterium massiliensis).